We begin with the raw amino-acid sequence, 341 residues long: S-adenosylmethionine:tRNA ribosyltransferase-isomerase (341 aa).

The protein belongs to the QueA family. As to quaternary structure, monomer.

Its subcellular location is the cytoplasm. The catalysed reaction is 7-aminomethyl-7-carbaguanosine(34) in tRNA + S-adenosyl-L-methionine = epoxyqueuosine(34) in tRNA + adenine + L-methionine + 2 H(+). The protein operates within tRNA modification; tRNA-queuosine biosynthesis. Functionally, transfers and isomerizes the ribose moiety from AdoMet to the 7-aminomethyl group of 7-deazaguanine (preQ1-tRNA) to give epoxyqueuosine (oQ-tRNA). The polypeptide is S-adenosylmethionine:tRNA ribosyltransferase-isomerase (Staphylococcus aureus (strain USA300)).